The primary structure comprises 275 residues: Large ribosomal subunit protein uL2 (275 aa).

Disordered regions lie at residues 28–48 (KPYA…NNGR) and 223–275 (VVMN…RNKK).

It belongs to the universal ribosomal protein uL2 family. In terms of assembly, part of the 50S ribosomal subunit. Forms a bridge to the 30S subunit in the 70S ribosome.

Its function is as follows. One of the primary rRNA binding proteins. Required for association of the 30S and 50S subunits to form the 70S ribosome, for tRNA binding and peptide bond formation. It has been suggested to have peptidyltransferase activity; this is somewhat controversial. Makes several contacts with the 16S rRNA in the 70S ribosome. This chain is Large ribosomal subunit protein uL2, found in Photobacterium profundum (strain SS9).